The sequence spans 507 residues: Chromosomal replication initiator protein DnaA (507 aa).

Positions 1–87 are domain I, interacts with DnaA modulators; sequence MSVELWQQCV…IGSKRSSAPR (87 aa). The span at 85–110 shows a compositional bias: low complexity; it reads APRAAPNAPLAAAQVSQAQANAAPAS. Residues 85-158 form a disordered region; it reads APRAAPNAPL…QQAPVRAEQR (74 aa). Residues 87–170 are domain II; the sequence is RAAPNAPLAA…QVEGALKHTS (84 aa). A compositionally biased stretch (basic and acidic residues) spans 126 to 140; that stretch reads QKTEEISEEPSRDSF. The segment at 171–387 is domain III, AAA+ region; that stretch reads YLNRTFTFEN…GALKRVIAHS (217 aa). ATP contacts are provided by glycine 215, glycine 217, lysine 218, and threonine 219. The segment at 388–507 is domain IV, binds dsDNA; it reads HFMGRDITIE…YKNLLRTLTT (120 aa).

Belongs to the DnaA family. Oligomerizes as a right-handed, spiral filament on DNA at oriC.

It is found in the cytoplasm. In terms of biological role, plays an essential role in the initiation and regulation of chromosomal replication. ATP-DnaA binds to the origin of replication (oriC) to initiate formation of the DNA replication initiation complex once per cell cycle. Binds the DnaA box (a 9 base pair repeat at the origin) and separates the double-stranded (ds)DNA. Forms a right-handed helical filament on oriC DNA; dsDNA binds to the exterior of the filament while single-stranded (ss)DNA is stabiized in the filament's interior. The ATP-DnaA-oriC complex binds and stabilizes one strand of the AT-rich DNA unwinding element (DUE), permitting loading of DNA polymerase. After initiation quickly degrades to an ADP-DnaA complex that is not apt for DNA replication. Binds acidic phospholipids. This is Chromosomal replication initiator protein DnaA from Pseudomonas fluorescens (strain Pf0-1).